The following is a 100-amino-acid chain: Urease subunit gamma (100 aa).

The protein belongs to the urease gamma subunit family. Heterotrimer of UreA (gamma), UreB (beta) and UreC (alpha) subunits. Three heterotrimers associate to form the active enzyme.

The protein localises to the cytoplasm. It catalyses the reaction urea + 2 H2O + H(+) = hydrogencarbonate + 2 NH4(+). The protein operates within nitrogen metabolism; urea degradation; CO(2) and NH(3) from urea (urease route): step 1/1. This Alcanivorax borkumensis (strain ATCC 700651 / DSM 11573 / NCIMB 13689 / SK2) protein is Urease subunit gamma.